The primary structure comprises 449 residues: Glucose-6-phosphate isomerase (449 aa).

Residue E291 is the Proton donor of the active site. Active-site residues include H312 and K426.

This sequence belongs to the GPI family.

It is found in the cytoplasm. The catalysed reaction is alpha-D-glucose 6-phosphate = beta-D-fructose 6-phosphate. It functions in the pathway carbohydrate biosynthesis; gluconeogenesis. It participates in carbohydrate degradation; glycolysis; D-glyceraldehyde 3-phosphate and glycerone phosphate from D-glucose: step 2/4. Catalyzes the reversible isomerization of glucose-6-phosphate to fructose-6-phosphate. The chain is Glucose-6-phosphate isomerase from Clostridium botulinum (strain Alaska E43 / Type E3).